Here is a 146-residue protein sequence, read N- to C-terminus: Large ribosomal subunit protein uL15 (146 aa).

Positions 1-62 (MRLHELRPKT…GQMPLQERLP (62 aa)) are disordered. The span at 10–21 (TNYKKSRKRKGR) shows a compositional bias: basic residues. Positions 42-52 (TGGGVRPGFEG) are enriched in gly residues.

Belongs to the universal ribosomal protein uL15 family. Part of the 50S ribosomal subunit.

In terms of biological role, binds to the 23S rRNA. The chain is Large ribosomal subunit protein uL15 from Natranaerobius thermophilus (strain ATCC BAA-1301 / DSM 18059 / JW/NM-WN-LF).